The primary structure comprises 153 residues: ASMLPLDKCFKASFCGDDSLIYLPKGLEYPDIQATANLVWNFEAKLFRKKYGYFCGKYIIHHANGCIVYPDPLKLISKLGNKSLVGYEHVEEFRISLLDVAHSLFNGAYFHLLDDAIHELFPNAGGCSFVINCLCKYLSDKRLFRSLYIDVSK.

This sequence belongs to the tobamovirus RNA-directed RNA polymerase family.

The enzyme catalyses RNA(n) + a ribonucleoside 5'-triphosphate = RNA(n+1) + diphosphate. Its function is as follows. The replicase large subunit is an RNA-dependent RNA polymerase active in viral RNA replication. This chain is Replicase large subunit, found in Citrullus (Cucumber).